A 129-amino-acid chain; its full sequence is Replication initiation control protein YabA (129 aa).

The interval 52-71 (LSLTDEATPEPKAETEAEHG) is disordered. Basic and acidic residues predominate over residues 60-71 (PEPKAETEAEHG). 4 residues coordinate Zn(2+): histidine 103, cysteine 105, cysteine 119, and cysteine 122.

This sequence belongs to the YabA family. In terms of assembly, homotetramer. Interacts with both DnaA and DnaN, acting as a bridge between these two proteins. Requires Zn(2+) as cofactor.

Its subcellular location is the cytoplasm. The protein resides in the nucleoid. Functionally, involved in control of chromosome replication initiation. Inhibits the cooperative binding of DnaA to the oriC region, thus negatively regulating initiation of chromosome replication. Inhibits the ability of DnaA-ATP to form a helix on DNA; does not disassemble preformed DnaA-DNA helices. Decreases the residence time of DnaA on the chromosome at its binding sites (oriC, replication forks and promoter-binding sites). Tethers DnaA to the replication machinery via the DNA polymerase beta sliding clamp subunit (dnaN). Associates with oriC and other DnaA targets on the chromosome in a DnaA-dependent manner. In Listeria monocytogenes serotype 4a (strain HCC23), this protein is Replication initiation control protein YabA.